Here is a 401-residue protein sequence, read N- to C-terminus: 1-deoxy-D-xylulose 5-phosphate reductoisomerase (401 aa).

NADPH-binding residues include T10, G11, S12, I13, G36, N38, and N124. K125 contacts 1-deoxy-D-xylulose 5-phosphate. E126 provides a ligand contact to NADPH. Residue D150 participates in Mn(2+) binding. The 1-deoxy-D-xylulose 5-phosphate site is built by S151, E152, S186, and H209. E152 contacts Mn(2+). G215 contacts NADPH. The 1-deoxy-D-xylulose 5-phosphate site is built by S222, N227, K228, and E231. E231 is a Mn(2+) binding site.

The protein belongs to the DXR family. The cofactor is Mg(2+). Requires Mn(2+) as cofactor.

The catalysed reaction is 2-C-methyl-D-erythritol 4-phosphate + NADP(+) = 1-deoxy-D-xylulose 5-phosphate + NADPH + H(+). It participates in isoprenoid biosynthesis; isopentenyl diphosphate biosynthesis via DXP pathway; isopentenyl diphosphate from 1-deoxy-D-xylulose 5-phosphate: step 1/6. Functionally, catalyzes the NADPH-dependent rearrangement and reduction of 1-deoxy-D-xylulose-5-phosphate (DXP) to 2-C-methyl-D-erythritol 4-phosphate (MEP). The polypeptide is 1-deoxy-D-xylulose 5-phosphate reductoisomerase (Vibrio parahaemolyticus serotype O3:K6 (strain RIMD 2210633)).